The chain runs to 325 residues: DNA repair and recombination protein RadA (325 aa).

An ATP-binding site is contributed by 107–114; it reads GEFGSGKT.

It belongs to the eukaryotic RecA-like protein family.

Its function is as follows. Involved in DNA repair and in homologous recombination. Binds and assemble on single-stranded DNA to form a nucleoprotein filament. Hydrolyzes ATP in a ssDNA-dependent manner and promotes DNA strand exchange between homologous DNA molecules. In Methanococcoides burtonii (strain DSM 6242 / NBRC 107633 / OCM 468 / ACE-M), this protein is DNA repair and recombination protein RadA.